A 92-amino-acid chain; its full sequence is MGIFDWKHWIVILVVVVLVFGTKKLKNLGTDVGESIKGFRKAMNDDEKPADPTVTPAQPVPPVQPQATAQANPPHTIDVQAQKVEEPIRKDV.

The helical transmembrane segment at M1–G21 threads the bilayer. The tract at residues M43 to V92 is disordered. Residues P65–P74 show a composition bias toward low complexity. Residues K83–V92 show a composition bias toward basic and acidic residues.

The protein belongs to the TatA/E family. In terms of assembly, the Tat system comprises two distinct complexes: a TatABC complex, containing multiple copies of TatA, TatB and TatC subunits, and a separate TatA complex, containing only TatA subunits. Substrates initially bind to the TatABC complex, which probably triggers association of the separate TatA complex to form the active translocon.

The protein resides in the cell inner membrane. Its function is as follows. Part of the twin-arginine translocation (Tat) system that transports large folded proteins containing a characteristic twin-arginine motif in their signal peptide across membranes. TatA could form the protein-conducting channel of the Tat system. The protein is Sec-independent protein translocase protein TatA of Pseudomonas fluorescens (strain Pf0-1).